The chain runs to 505 residues: DEAD-box ATP-dependent RNA helicase 41 (505 aa).

The HIT-type zinc finger occupies 27-56; that stretch reads GEPKCVICSRYGEYICDETNDDVCSLECKQ. Residues 110–138 carry the Q motif motif; sequence LTFTSCGLPPKLLLNLETAGYDFPTPIQM. One can recognise a Helicase ATP-binding domain in the interval 141 to 318; sequence IPAALTGKSL…GSLAKEIILV (178 aa). 154 to 161 lines the ATP pocket; sequence ADTGSGKT. Residues 267 to 270 carry the DEAD box motif; the sequence is DEVD. The 151-residue stretch at 342-492 folds into the Helicase C-terminal domain; sequence KKQKLFDILR…AIPKELINLT (151 aa).

It belongs to the DEAD box helicase family. DDX59 subfamily.

It carries out the reaction ATP + H2O = ADP + phosphate + H(+). The protein is DEAD-box ATP-dependent RNA helicase 41 (RH41) of Arabidopsis thaliana (Mouse-ear cress).